A 520-amino-acid chain; its full sequence is Protein OS-9 homolog (520 aa).

The N-terminal stretch at 1–23 (MIRRIRTLTPLLVLACAGSGAWA) is a signal peptide. Over residues 121 to 135 (QVDNGNRDQTNGAES) the composition is skewed to polar residues. The interval 121–144 (QVDNGNRDQTNGAESTSKEDEQRE) is disordered. Residues 161-302 (GKCMYYISGW…VIYTPRLCND (142 aa)) enclose the MRH domain. A disulfide bridge connects residues Cys-163 and Cys-176. Trp-170, Trp-171, Gln-183, Asp-257, Arg-263, Glu-284, and Tyr-290 together coordinate a mannooligosaccharide derivative. Cystine bridges form between Cys-256-Cys-288 and Cys-271-Cys-300. The segment at 442 to 520 (GLVGTVDSND…SEEIFFKDEL (79 aa)) is disordered. Over residues 461–471 (GSISQPAQGTT) the composition is skewed to polar residues. Residues 473 to 499 (DKGESNAETGEEKKKADEKIDHYEPEK) show a composition bias toward basic and acidic residues. The Prevents secretion from ER motif lies at 517 to 520 (KDEL).

Belongs to the OS-9 family. In terms of assembly, interacts with missfolded ER lumenal proteins.

Its subcellular location is the endoplasmic reticulum membrane. Functionally, lectin involved in the quality control of the secretory pathway. As a member of the endoplasmic reticulum-associated degradation lumenal (ERAD-L) surveillance system, targets misfolded endoplasmic reticulum lumenal glycoproteins for degradation. This Aspergillus fumigatus (strain ATCC MYA-4609 / CBS 101355 / FGSC A1100 / Af293) (Neosartorya fumigata) protein is Protein OS-9 homolog (yos9).